A 342-amino-acid chain; its full sequence is CD2 antigen cytoplasmic tail-binding protein 2 (342 aa).

A disordered region spans residues 1-64; sequence MPKRKVTFQG…DEEGSSKYDI (64 aa). K26 is covalently cross-linked (Glycyl lysine isopeptide (Lys-Gly) (interchain with G-Cter in SUMO2)). K44 carries the post-translational modification N6-acetyllysine. S46, S49, and S117 each carry phosphoserine. Disordered stretches follow at residues 130-150 and 177-200; these read RPPDKHQVSDSEEEDSLGQTP and LGARGGGKGSNSKGTGRPNSPQRL. A Phosphoserine modification is found at S196. The GYF domain occupies 281 to 339; it reads DVMWEYKWENTGDAELYGPFTSAQMQTWVSEGYFPDGVYCRKLDPPGGQFYNSKRIDFE.

In terms of assembly, component of the U5 snRNP complex composed of the U5 snRNA and at least PRPF6, PRPF8, SNRNP200, EFTUD2, SNRNP40, DDX23, TXNL4A and CD2BP2. Interacts directly with TXNL4A and PRPF6. Interacts (via GYF domain) with CD2 (via Pro-rich sequence in the cytoplasmic domain). Interacts with PQBP1.

It is found in the cytoplasm. It localises to the nucleus. Functionally, involved in pre-mRNA splicing as component of the U5 snRNP complex that is involved in spliceosome assembly. This chain is CD2 antigen cytoplasmic tail-binding protein 2 (Cd2bp2), found in Mus musculus (Mouse).